A 331-amino-acid polypeptide reads, in one-letter code: Phenol 2-monooxygenase, oxygenase component DmpL (331 aa).

Belongs to the TmoE/XamoE family. As to quaternary structure, the multicomponent enzyme phenol hydroxylase is formed by DmpL (P1 component), DmpM (P2 component), DmpN (P3 component), DmpO (P4 component) and DmpP (P5 component). The oxygenase component is a dimer composed of three subunits, DmpL, DmpN and DmpO (DmpLNO). DmpL interacts with the auxiliary protein DmpK (P0 component).

It carries out the reaction phenol + NADH + O2 + H(+) = catechol + NAD(+) + H2O. Its pathway is aromatic compound metabolism; phenol degradation. Requires DmpM for efficient turnover. The activity of DmpLNO oxygenase is inhibited by dithiothreitol (DTT) by a mechanism apparently involving H(2)O(2) generation. Its function is as follows. Part of a multicomponent enzyme which catalyzes the degradation of phenol and some of its methylated derivatives. DmpL, DmpN and DmpO form the oxygenase component of the complex. Required for growth on phenol and for in vitro phenol hydroxylase activity. The chain is Phenol 2-monooxygenase, oxygenase component DmpL from Pseudomonas sp. (strain CF600).